The sequence spans 237 residues: Survival of motor neuron-related-splicing factor 30 (237 aa).

Residues S52–P69 are compositionally biased toward polar residues. Disordered regions lie at residues S52–W73 and R149–F198. In terms of domain architecture, Tudor spans S72–D132. The short motif at K142–V160 is the Nuclear localization signal element. Residues Y151–Q161 show a composition bias toward basic residues. Over residues R162–S175 the composition is skewed to basic and acidic residues. Positions K176–Y185 are enriched in polar residues.

The protein belongs to the SMN family. In terms of assembly, associates with spliceosomes.

It localises to the nucleus speckle. It is found in the nucleus. The protein localises to the cajal body. Its function is as follows. Involved in spliceosome assembly. This is Survival of motor neuron-related-splicing factor 30 (smndc1) from Danio rerio (Zebrafish).